The primary structure comprises 369 residues: Melanoma-associated antigen 10 (369 aa).

The interval 1 to 131 (MPRAPKRQRC…VLPDSESLPR (131 aa)) is disordered. The segment covering 39–62 (SSSTSTSSSFPSSFPSSSSSSSSS) has biased composition (low complexity). 2 stretches are compositionally biased toward polar residues: residues 85 to 96 (QSAQIACSSPSV) and 107 to 121 (EGSS…STLQ). The MAGE domain maps to 134-333 (IDEKVTDLVQ…RSFPLWYEEA (200 aa)). A disordered region spans residues 340-369 (RAQDRIATTDDTTAMASASSSATGSFSYPE). The span at 348-369 (TDDTTAMASASSSATGSFSYPE) shows a compositional bias: low complexity.

As to expression, expressed in many tumors of several types, such as melanoma, head and neck squamous cell carcinoma, lung carcinoma and breast carcinoma, but not in normal tissues except for spermatogonia, spermatocytes and placenta.

It is found in the nucleus. Its function is as follows. Not known, though may play a role in embryonal development and tumor transformation or aspects of tumor progression. This Homo sapiens (Human) protein is Melanoma-associated antigen 10 (MAGEA10).